The primary structure comprises 251 residues: Probable transcriptional regulatory protein MLBr00475 (251 aa).

This sequence belongs to the TACO1 family.

Its subcellular location is the cytoplasm. This Mycobacterium leprae (strain Br4923) protein is Probable transcriptional regulatory protein MLBr00475.